We begin with the raw amino-acid sequence, 120 residues long: Small ribosomal subunit protein bS6 (120 aa).

Positions 97–112 (SNEPSPILKNQSTENT) are enriched in polar residues. The interval 97–120 (SNEPSPILKNQSTENTPVIDVTAN) is disordered.

Belongs to the bacterial ribosomal protein bS6 family.

Binds together with bS18 to 16S ribosomal RNA. This is Small ribosomal subunit protein bS6 from Rickettsia bellii (strain OSU 85-389).